The following is a 454-amino-acid chain: MKQNSLNVKQKKLSKIAFSHVGCEKNLVDTEHMQGLLHKEGYEVDSNINDANVVVVNTCSFIETAREESIRKILEYTNQGKEVIVAGCMAQHFKDELIKEIPEIKGLVGTGDYQKIAKVLDRVEKGEIVNEVSKIPEFIADEEMPRFVDKNKFVAYLRIAEGCNYNCAFCIIPKLRGPQRSRTIESILSEAKSLAKKGIQEIILISQITTNYGQDIYGKPSLAKLLNELSKVPIPWIRIHYAYPTGLTDEVIRAFKDSKNIVPYFDLPLQHSHPDVLKSMNRPWQASLNESILEKIREEIPSAVLRTSLIVGFPGEKKEHFEHLLQFLDRHKFDHVGVFIFSPEEGTAAFHLPNKVSPEVAEARKDNVISVQQNISREKNQIYVGSKMKIMVEQISDNNELIGRSYNFAPEIDGTVILSVKEKIDLKNYIGKFVEANISFADEYDLYGETIKIL.

The 112-residue stretch at 14–125 (SKIAFSHVGC…IAKVLDRVEK (112 aa)) folds into the MTTase N-terminal domain. Residues C23, C59, C88, C163, C167, and C170 each coordinate [4Fe-4S] cluster. Residues 149-378 (DKNKFVAYLR…ISVQQNISRE (230 aa)) form the Radical SAM core domain. The TRAM domain maps to 381-452 (QIYVGSKMKI…EYDLYGETIK (72 aa)).

The protein belongs to the methylthiotransferase family. RimO subfamily. [4Fe-4S] cluster serves as cofactor.

It is found in the cytoplasm. It carries out the reaction L-aspartate(89)-[ribosomal protein uS12]-hydrogen + (sulfur carrier)-SH + AH2 + 2 S-adenosyl-L-methionine = 3-methylsulfanyl-L-aspartate(89)-[ribosomal protein uS12]-hydrogen + (sulfur carrier)-H + 5'-deoxyadenosine + L-methionine + A + S-adenosyl-L-homocysteine + 2 H(+). Catalyzes the methylthiolation of an aspartic acid residue of ribosomal protein uS12. This chain is Ribosomal protein uS12 methylthiotransferase RimO, found in Prochlorococcus marinus (strain MIT 9301).